We begin with the raw amino-acid sequence, 216 residues long: MVNRTAIIKQPDNISCFNDVYKLQKEYQEALILDNSNPDFIWIGEHQLCYTLGRGSNYDNLLFSLNDEKYDVFKIDRGGEVTCHMPGQLVTYLILDLKNFNKDLNWYLRKIEKIIIKILGNFNIDCHLKKGFTGVWIENKKIASIGIGCRRWITINGFSINFNCELENFNKIVPCGIENCLMANMIDYNKNLNIKEVKKIVKKIIQEEFNFDFVSK.

Positions 35–213 (NSNPDFIWIG…IIQEEFNFDF (179 aa)) constitute a BPL/LPL catalytic domain. Residues 77 to 84 (RGGEVTCH), 144 to 146 (SIG), and 157 to 159 (GFS) contribute to the substrate site. Cys-175 functions as the Acyl-thioester intermediate in the catalytic mechanism.

This sequence belongs to the LipB family.

The protein localises to the cytoplasm. It catalyses the reaction octanoyl-[ACP] + L-lysyl-[protein] = N(6)-octanoyl-L-lysyl-[protein] + holo-[ACP] + H(+). The protein operates within protein modification; protein lipoylation via endogenous pathway; protein N(6)-(lipoyl)lysine from octanoyl-[acyl-carrier-protein]: step 1/2. Its function is as follows. Catalyzes the transfer of endogenously produced octanoic acid from octanoyl-acyl-carrier-protein onto the lipoyl domains of lipoate-dependent enzymes. Lipoyl-ACP can also act as a substrate although octanoyl-ACP is likely to be the physiological substrate. The polypeptide is Octanoyltransferase (Prochlorococcus marinus (strain MIT 9312)).